The following is a 229-amino-acid chain: Heptaprenylglyceryl phosphate synthase (229 aa).

Sn-glycerol 1-phosphate is bound at residue K12. D14 and S40 together coordinate Mg(2+). Residues 159 to 164, G189, and 209 to 210 each bind sn-glycerol 1-phosphate; these read YLEYSG and GN.

The protein belongs to the GGGP/HepGP synthase family. Group I subfamily. As to quaternary structure, homodimer. Mg(2+) is required as a cofactor.

It catalyses the reaction sn-glycerol 1-phosphate + all-trans-heptaprenyl diphosphate = 3-heptaprenyl-sn-glycero-1-phosphate + diphosphate. It participates in membrane lipid metabolism; glycerophospholipid metabolism. Prenyltransferase that catalyzes in vivo the transfer of the heptaprenyl moiety of heptaprenyl pyrophosphate (HepPP; 35 carbon atoms) to the C3 hydroxyl of sn-glycerol-1-phosphate (G1P), producing heptaprenylglyceryl phosphate (HepGP). This reaction is an ether-bond-formation step in the biosynthesis of archaea-type G1P-based membrane lipids found in Bacillales. This Bacillus cereus (strain ATCC 14579 / DSM 31 / CCUG 7414 / JCM 2152 / NBRC 15305 / NCIMB 9373 / NCTC 2599 / NRRL B-3711) protein is Heptaprenylglyceryl phosphate synthase.